The chain runs to 713 residues: Forkhead box protein P2 (713 aa).

Positions 1 to 28 (MMQESATETISNSSMNQNGMSTLSSQLD) are enriched in polar residues. Disordered stretches follow at residues 1-45 (MMQE…SEVS) and 279-337 (DNGI…TGAS). The segment covering 290–303 (TTNNSSSTTSSTTS) has biased composition (low complexity). Over residues 313–322 (SIVNGQSSVL) the composition is skewed to polar residues. The segment covering 324–335 (ARRDSSSHEETG) has biased composition (basic and acidic residues). A C2H2-type zinc finger spans residues 344–369 (GVCKWPGCESICEDFGQFLKHLNNEH). The interval 386–407 (VQQLEIQLSKERERLQAMMTHL) is leucine-zipper. Residues 420–424 (PLNLV) form a CTBP1-binding region. The segment covering 436–457 (TSPQSLPQTPTTPTAPVTPITQ) has biased composition (low complexity). Residues 436-463 (TSPQSLPQTPTTPTAPVTPITQGPSVIT) form a disordered region. A DNA-binding region (fork-head) is located at residues 502–592 (RPPFTYATLI…SQKITGSPTL (91 aa)). Disordered regions lie at residues 647–666 (LDHI…QPHI) and 676–713 (VIAE…EDLE). Residues 697-713 (LEDDREIEEEPLSEDLE) are compositionally biased toward acidic residues.

As to quaternary structure, forms homodimers and heterodimers with FOXP1 and FOXP4. Dimerization is required for DNA-binding. Interacts with CTBP1. Interacts with FOXP1. Interacts with TBR1. Interacts with ZMYM2.

It is found in the nucleus. Its function is as follows. Transcriptional repressor that may play a role in the specification and differentiation of lung epithelium. May also play a role in developing neural, gastrointestinal and cardiovascular tissues. Can act with CTBP1 to synergistically repress transcription but CTPBP1 is not essential. Plays a role in synapse formation by regulating SRPX2 levels. The polypeptide is Forkhead box protein P2 (FOXP2) (Hylobates lar (Lar gibbon)).